The following is a 435-amino-acid chain: D-amino acid dehydrogenase (435 aa).

An FAD-binding site is contributed by 3–17 (VIVLGGGVLGVSTAW).

This sequence belongs to the DadA oxidoreductase family. FAD is required as a cofactor.

The enzyme catalyses a D-alpha-amino acid + A + H2O = a 2-oxocarboxylate + AH2 + NH4(+). It functions in the pathway amino-acid degradation; D-alanine degradation; NH(3) and pyruvate from D-alanine: step 1/1. Its function is as follows. Oxidative deamination of D-amino acids. This Chromobacterium violaceum (strain ATCC 12472 / DSM 30191 / JCM 1249 / CCUG 213 / NBRC 12614 / NCIMB 9131 / NCTC 9757 / MK) protein is D-amino acid dehydrogenase.